The following is a 375-amino-acid chain: Growth/differentiation factor 8 (375 aa).

Residues Met1 to Ala18 form the signal peptide. A propeptide spanning residues Gly19–Arg266 is cleaved from the precursor. N-linked (GlcNAc...) asparagine glycans are attached at residues Asn48 and Asn71. Cystine bridges form between Cys272–Cys282, Cys281–Cys340, Cys309–Cys372, and Cys313–Cys374.

Belongs to the TGF-beta family. As to quaternary structure, homodimer; disulfide-linked. Interacts with WFIKKN2, leading to inhibit its activity. Interacts with FSTL3. Synthesized as large precursor molecule that undergoes proteolytic cleavage to generate an N-terminal propeptide and a disulfide linked C-terminal dimer, which is the biologically active molecule. The circulating form consists of a latent complex of the C-terminal dimer and other proteins, including its propeptide, which maintain the C-terminal dimer in a latent, inactive state. Ligand activation requires additional cleavage of the prodomain by a tolloid-like metalloproteinase.

It localises to the secreted. In terms of biological role, acts specifically as a negative regulator of skeletal muscle growth. The sequence is that of Growth/differentiation factor 8 (MSTN) from Sylvicapra grimmia (Grey duiker).